The following is a 365-amino-acid chain: Phospho-N-acetylmuramoyl-pentapeptide-transferase (365 aa).

Transmembrane regions (helical) follow at residues 2-22 (ISLI…TPLL), 51-71 (TLGG…SALY), 80-100 (PSWS…LGFI), 118-138 (GKFI…LILP), 167-187 (VAIV…TNAI), 196-216 (LAAG…FWEF), 234-254 (PLDL…FLWY), 256-276 (SNPA…GLFA), 277-297 (AMSI…LFVI), and 340-360 (FWMI…GDWV).

It belongs to the glycosyltransferase 4 family. MraY subfamily. It depends on Mg(2+) as a cofactor.

The protein resides in the cell membrane. It catalyses the reaction UDP-N-acetyl-alpha-D-muramoyl-L-alanyl-gamma-D-glutamyl-meso-2,6-diaminopimeloyl-D-alanyl-D-alanine + di-trans,octa-cis-undecaprenyl phosphate = di-trans,octa-cis-undecaprenyl diphospho-N-acetyl-alpha-D-muramoyl-L-alanyl-D-glutamyl-meso-2,6-diaminopimeloyl-D-alanyl-D-alanine + UMP. It functions in the pathway cell wall biogenesis; peptidoglycan biosynthesis. Catalyzes the initial step of the lipid cycle reactions in the biosynthesis of the cell wall peptidoglycan: transfers peptidoglycan precursor phospho-MurNAc-pentapeptide from UDP-MurNAc-pentapeptide onto the lipid carrier undecaprenyl phosphate, yielding undecaprenyl-pyrophosphoryl-MurNAc-pentapeptide, known as lipid I. This Bifidobacterium adolescentis (strain ATCC 15703 / DSM 20083 / NCTC 11814 / E194a) protein is Phospho-N-acetylmuramoyl-pentapeptide-transferase.